A 384-amino-acid chain; its full sequence is DNA dC-&gt;dU-editing enzyme APOBEC-3G (384 aa).

The essential for cytoplasmic localization stretch occupies residues methionine 1–phenylalanine 60. CMP/dCMP-type deaminase domains lie at arginine 29–leucine 138 and glycine 214–leucine 328. Threonine 32 bears the Phosphothreonine; by PKA mark. 3 residues coordinate Zn(2+): histidine 65, cysteine 97, and cysteine 100. Residues glutamate 209 to serine 336 form a necessary for homooligomerization region. An interaction with DNA region spans residues glutamate 213 to arginine 215. Position 218 is a phosphothreonine; by PKA and CAMK2 (threonine 218). Histidine 257 is a Zn(2+) binding site. Glutamate 259 acts as the Proton donor in catalysis. Zn(2+)-binding residues include cysteine 288 and cysteine 291. An interaction with DNA region spans residues arginine 313–arginine 320.

This sequence belongs to the cytidine and deoxycytidylate deaminase family. As to quaternary structure, homodimer. Zn(2+) is required as a cofactor.

It localises to the cytoplasm. It is found in the nucleus. The protein resides in the P-body. It carries out the reaction a 2'-deoxycytidine in single-stranded DNA + H2O + H(+) = a 2'-deoxyuridine in single-stranded DNA + NH4(+). Functionally, DNA deaminase (cytidine deaminase) which acts as an inhibitor of retrovirus replication and retrotransposon mobility. After the penetration of retroviral nucleocapsids into target cells of infection and the initiation of reverse transcription, it can induce the conversion of cytosine to uracil in the minus-sense single-strand viral DNA, leading to G-to-A hypermutations in the subsequent plus-strand viral DNA. The resultant detrimental levels of mutations in the proviral genome, along with a deamination-independent mechanism that works prior to the proviral integration, together exert efficient antiretroviral effects in infected target cells. Selectively targets single-stranded DNA and does not deaminate double-stranded DNA or single- or double-stranded RNA. This is DNA dC-&gt;dU-editing enzyme APOBEC-3G (APOBEC3G) from Pongo pygmaeus (Bornean orangutan).